The sequence spans 220 residues: Ras-related protein Rab-1 (220 aa).

14-21 (GDSGTGKS) contributes to the GTP binding site. Positions 36–44 (YMSTIGVDF) match the Effector region motif. Residues 62-66 (DTAGQ) and 121-124 (NKID) contribute to the GTP site. Cys-219 carries the S-geranylgeranyl cysteine lipid modification.

The protein belongs to the small GTPase superfamily. Rab family.

It localises to the cell membrane. Protein transport. Probably involved in vesicular traffic from ER to Golgi. The chain is Ras-related protein Rab-1 (rab1) from Theileria parva (East coast fever infection agent).